We begin with the raw amino-acid sequence, 228 residues long: Phosphoribosylformylglycinamidine synthase subunit PurQ (228 aa).

Residues 2–225 enclose the Glutamine amidotransferase type-1 domain; that stretch reads KAAVISFPGS…INQTEGADVR (224 aa). C86 acts as the Nucleophile in catalysis. Catalysis depends on residues H194 and E196.

Part of the FGAM synthase complex composed of 1 PurL, 1 PurQ and 2 PurS subunits.

Its subcellular location is the cytoplasm. The enzyme catalyses N(2)-formyl-N(1)-(5-phospho-beta-D-ribosyl)glycinamide + L-glutamine + ATP + H2O = 2-formamido-N(1)-(5-O-phospho-beta-D-ribosyl)acetamidine + L-glutamate + ADP + phosphate + H(+). It catalyses the reaction L-glutamine + H2O = L-glutamate + NH4(+). Its pathway is purine metabolism; IMP biosynthesis via de novo pathway; 5-amino-1-(5-phospho-D-ribosyl)imidazole from N(2)-formyl-N(1)-(5-phospho-D-ribosyl)glycinamide: step 1/2. Functionally, part of the phosphoribosylformylglycinamidine synthase complex involved in the purines biosynthetic pathway. Catalyzes the ATP-dependent conversion of formylglycinamide ribonucleotide (FGAR) and glutamine to yield formylglycinamidine ribonucleotide (FGAM) and glutamate. The FGAM synthase complex is composed of three subunits. PurQ produces an ammonia molecule by converting glutamine to glutamate. PurL transfers the ammonia molecule to FGAR to form FGAM in an ATP-dependent manner. PurS interacts with PurQ and PurL and is thought to assist in the transfer of the ammonia molecule from PurQ to PurL. In Lacticaseibacillus paracasei (strain ATCC 334 / BCRC 17002 / CCUG 31169 / CIP 107868 / KCTC 3260 / NRRL B-441) (Lactobacillus paracasei), this protein is Phosphoribosylformylglycinamidine synthase subunit PurQ.